A 218-amino-acid chain; its full sequence is Adenylate kinase (218 aa).

10–15 (GAGKGT) serves as a coordination point for ATP. The interval 30–59 (STGDMLRAAVKAGTPLGQQAKAVMDAGQLV) is NMP. Residues threonine 31, arginine 36, 57-59 (QLV), 85-88 (GFPR), and glutamine 92 each bind AMP. An LID region spans residues 122–159 (GRRSHPASGRTYHVKFNPPKVEGQDDVTGEPLVQREDD). ATP contacts are provided by residues arginine 123 and 132–133 (TY). Residues 127–151 (PASGRTYHVKFNPPKVEGQDDVTGE) are disordered. AMP-binding residues include arginine 156 and arginine 167. Glycine 203 serves as a coordination point for ATP.

The protein belongs to the adenylate kinase family. In terms of assembly, monomer.

It localises to the cytoplasm. It carries out the reaction AMP + ATP = 2 ADP. It participates in purine metabolism; AMP biosynthesis via salvage pathway; AMP from ADP: step 1/1. In terms of biological role, catalyzes the reversible transfer of the terminal phosphate group between ATP and AMP. Plays an important role in cellular energy homeostasis and in adenine nucleotide metabolism. This Delftia acidovorans (strain DSM 14801 / SPH-1) protein is Adenylate kinase.